We begin with the raw amino-acid sequence, 234 residues long: BTB/POZ domain-containing protein KCTD5 (234 aa).

N-acetylalanine is present on A2. The 103-residue stretch at 44–146 folds into the BTB domain; that stretch reads KWVRLNVGGT…LVKDKIRERD (103 aa). The interval 213-234 is disordered; the sequence is PYGTTSEPSEKAKILQERGSRM. A compositionally biased stretch (basic and acidic residues) spans 220 to 234; it reads PSEKAKILQERGSRM.

As to quaternary structure, homopentamer. Interacts (via C-terminus) with GRASP55/GORASP2. Interacts with CUL3 and with ubiquitinated proteins. Interacts with CRY1.

The protein localises to the cytoplasm. Its subcellular location is the cytosol. The protein resides in the nucleus. Its function is as follows. Its interaction with CUL3 suggests that it may act as a substrate adapter in some E3 ligase complex. Does not affect the function of Kv channel Kv2.1/KCNB1, Kv1.2/KCNA2, Kv4.2/KCND2 and Kv3.4/KCNC4. The sequence is that of BTB/POZ domain-containing protein KCTD5 (Kctd5) from Mus musculus (Mouse).